Reading from the N-terminus, the 1145-residue chain is DNA mismatch repair protein msh-3 (1145 aa).

Disordered regions lie at residues 1 to 183 (MAGP…GAKT) and 857 to 879 (SSSASSPDPNPTSPSGKPALAQL). The span at 13-33 (ASISSFFTPRNTSPLVNLSQN) shows a compositional bias: polar residues. Basic and acidic residues predominate over residues 121 to 131 (AERKKKEELHR). Over residues 158–169 (GEGEEGEDDEEE) the composition is skewed to acidic residues. The segment at 183–307 (TGKLTPMELQ…RKLTNVYTKG (125 aa)) is mispair-binding domain. An ATP-binding site is contributed by 882-889 (GPNMGGKS). The interval 1030–1056 (KSRTSMDDDAMEVDGDGDGQEGAGADK) is disordered. A compositionally biased stretch (acidic residues) spans 1036–1048 (DDDAMEVDGDGDG).

It belongs to the DNA mismatch repair MutS family. MSH3 subfamily. In terms of assembly, heterodimer consisting of msh-2-msh-3 (MutS beta). Forms a ternary complex with MutL alpha (mlh-1-pms-1).

It is found in the nucleus. Its function is as follows. Component of the post-replicative DNA mismatch repair system (MMR). Heterodimerizes with msh-2 to form MutS beta, which binds to DNA mismatches thereby initiating DNA repair. Msh-3 provides substrate-binding and substrate specificity to the complex. When bound, the MutS beta heterodimer bends the DNA helix and shields approximately 20 base pairs. Acts mainly to repair insertion-deletion loops (IDLs) from 2 to 13 nucleotides in size, but can also repair base-base and single insertion-deletion mismatches that occur during replication. After mismatch binding, forms a ternary complex with the MutL alpha heterodimer, which is thought to be responsible for directing the downstream MMR events, including strand discrimination, excision, and resynthesis. ATP binding and hydrolysis play a pivotal role in mismatch repair functions. This Neurospora crassa (strain ATCC 24698 / 74-OR23-1A / CBS 708.71 / DSM 1257 / FGSC 987) protein is DNA mismatch repair protein msh-3 (msh-3).